Consider the following 1023-residue polypeptide: 2-oxoglutarate dehydrogenase complex component E1 (1023 aa).

The transit peptide at 1 to 40 directs the protein to the mitochondrion; sequence MFHLRTCAAKLRPLTASQTVKTFSQNRPAAARTFGQIRCY. Lys-74 is modified (N6-succinyllysine). Position 100 is a phosphoserine (Ser-100). Ca(2+) contacts are provided by His-143, Asp-156, and Asp-158. Arg-312 contacts thiamine diphosphate. The residue at position 401 (Lys-401) is an N6-acetyllysine. Thiamine diphosphate contacts are provided by Asp-411, Asn-444, and Ile-446. 3 residues coordinate Mg(2+): Asp-411, Asn-444, and Ile-446. Residue Lys-534 forms a Glycyl lysine isopeptide (Lys-Gly) (interchain with G-Cter in ubiquitin) linkage. Lys-564 carries the post-translational modification N6-succinyllysine. Thiamine diphosphate is bound at residue Gln-676. Residue Lys-970 is modified to N6-acetyllysine.

The protein belongs to the alpha-ketoglutarate dehydrogenase family. Homodimer. The 2-oxoglutarate dehydrogenase complex is composed of OGDH (2-oxoglutarate dehydrogenase; E1), DLST (dihydrolipoamide succinyltransferase; E2), DLD (dihydrolipoamide dehydrogenase; E3) and the assembly factor KGD4. It contains multiple copies of the three enzymatic components (E1, E2 and E3). In the nucleus, the 2-oxoglutarate dehydrogenase complex associates with KAT2A. Interacts with ABHD11; this interaction maintains the functional lipoylation of the 2-oxoglutarate dehydrogenase complex. Requires thiamine diphosphate as cofactor. Mg(2+) serves as cofactor.

Its subcellular location is the mitochondrion. The protein resides in the nucleus. It catalyses the reaction N(6)-[(R)-lipoyl]-L-lysyl-[protein] + 2-oxoglutarate + H(+) = N(6)-[(R)-S(8)-succinyldihydrolipoyl]-L-lysyl-[protein] + CO2. Its activity is regulated as follows. Calcium ions and ADP stimulate, whereas ATP and NADH reduce catalytic activity. Its function is as follows. 2-oxoglutarate dehydrogenase (E1o) component of the 2-oxoglutarate dehydrogenase complex (OGDHC). Participates in the first step, rate limiting for the overall conversion of 2-oxoglutarate to succinyl-CoA and CO(2) catalyzed by the whole OGDHC. Catalyzes the irreversible decarboxylation of 2-oxoglutarate (alpha-ketoglutarate) via the thiamine diphosphate (ThDP) cofactor and subsequent transfer of the decarboxylated acyl intermediate on an oxidized dihydrolipoyl group that is covalently amidated to the E2 enzyme (dihydrolipoyllysine-residue succinyltransferase or DLST). Plays a key role in the Krebs (citric acid) cycle, which is a common pathway for oxidation of fuel molecules, including carbohydrates, fatty acids, and amino acids. Can catalyze the decarboxylation of 2-oxoadipate in vitro, but at a much lower rate than 2-oxoglutarate. Mainly active in the mitochondrion. A fraction of the 2-oxoglutarate dehydrogenase complex also localizes in the nucleus and is required for lysine succinylation of histones: associates with KAT2A on chromatin and provides succinyl-CoA to histone succinyltransferase KAT2A. This chain is 2-oxoglutarate dehydrogenase complex component E1, found in Bos taurus (Bovine).